Consider the following 530-residue polypeptide: Ubiquitin carboxyl-terminal hydrolase 17-like protein 5 (530 aa).

A USP domain is found at 80-375 (AGLQNMGNTC…QAYVLFYIQK (296 aa)). Cys-89 functions as the Nucleophile in the catalytic mechanism. The Proton acceptor role is filled by His-334. Composition is skewed to basic and acidic residues over residues 382-392 (SESVSRGREPR) and 398-412 (DTDR…KRDH). Disordered regions lie at residues 382–412 (SESV…KRDH) and 477–530 (NHHP…LVCQ). Residues 493-505 (TPTHQESMNTGTL) are compositionally biased toward polar residues. Over residues 510–524 (GRARRSKGKNKHSKR) the composition is skewed to basic residues.

The protein belongs to the peptidase C19 family. USP17 subfamily.

The protein localises to the nucleus. It is found in the endoplasmic reticulum. It catalyses the reaction Thiol-dependent hydrolysis of ester, thioester, amide, peptide and isopeptide bonds formed by the C-terminal Gly of ubiquitin (a 76-residue protein attached to proteins as an intracellular targeting signal).. Functionally, deubiquitinating enzyme that removes conjugated ubiquitin from specific proteins to regulate different cellular processes that may include cell proliferation, progression through the cell cycle, apoptosis, cell migration, and the cellular response to viral infection. The polypeptide is Ubiquitin carboxyl-terminal hydrolase 17-like protein 5 (USP17L5) (Homo sapiens (Human)).